We begin with the raw amino-acid sequence, 354 residues long: Uroporphyrinogen decarboxylase (354 aa).

Substrate is bound by residues 27-31 (RQAGR), aspartate 77, tyrosine 154, threonine 209, and histidine 327.

It belongs to the uroporphyrinogen decarboxylase family. In terms of assembly, homodimer.

It is found in the cytoplasm. It carries out the reaction uroporphyrinogen III + 4 H(+) = coproporphyrinogen III + 4 CO2. Its pathway is porphyrin-containing compound metabolism; protoporphyrin-IX biosynthesis; coproporphyrinogen-III from 5-aminolevulinate: step 4/4. Catalyzes the decarboxylation of four acetate groups of uroporphyrinogen-III to yield coproporphyrinogen-III. This is Uroporphyrinogen decarboxylase from Pseudomonas putida (strain ATCC 700007 / DSM 6899 / JCM 31910 / BCRC 17059 / LMG 24140 / F1).